Reading from the N-terminus, the 295-residue chain is tRNA dimethylallyltransferase (295 aa).

9-16 (GATATGKS) contacts ATP. Residue 11–16 (TATGKS) coordinates substrate. Residues 34 to 37 (DSRQ) form an interaction with substrate tRNA region.

Belongs to the IPP transferase family. Monomer. Mg(2+) is required as a cofactor.

It catalyses the reaction adenosine(37) in tRNA + dimethylallyl diphosphate = N(6)-dimethylallyladenosine(37) in tRNA + diphosphate. Catalyzes the transfer of a dimethylallyl group onto the adenine at position 37 in tRNAs that read codons beginning with uridine, leading to the formation of N6-(dimethylallyl)adenosine (i(6)A). The polypeptide is tRNA dimethylallyltransferase (Nostoc sp. (strain PCC 7120 / SAG 25.82 / UTEX 2576)).